The chain runs to 527 residues: Metal transporter Nramp6 (527 aa).

Helical transmembrane passes span 38-58 (FFSY…PGNF), 71-91 (ELLW…SLAA), 115-135 (FMLW…EVIG), 143-163 (LFNI…LILL), 173-193 (LEFL…VELH), 221-241 (ISLL…ALVL), 264-284 (GLAL…SGAV), 321-341 (LFAI…TYAG), 364-384 (CLAI…GAGK), 385-405 (LIII…VPLL), 427-447 (TWII…SSFI), and 458-478 (VAIV…LAAI).

This sequence belongs to the NRAMP (TC 2.A.55) family. In terms of tissue distribution, expressed in the vascular bundles of shoots, cotyledons, young leaves, sepals and petals, at the top of the flower stem and in the style. Expressed in the peduncle of developing siliques as well as in the septum and the funiculi.

It localises to the endomembrane system. In terms of biological role, probable intracellular cadmium (Cd) transporter that participates in the distribution or availability of Cd within the cell. This chain is Metal transporter Nramp6 (NRAMP6), found in Arabidopsis thaliana (Mouse-ear cress).